The following is a 382-amino-acid chain: Anhydro-N-acetylmuramic acid kinase (382 aa).

9-16 (GTSLDGID) provides a ligand contact to ATP.

The protein belongs to the anhydro-N-acetylmuramic acid kinase family.

The enzyme catalyses 1,6-anhydro-N-acetyl-beta-muramate + ATP + H2O = N-acetyl-D-muramate 6-phosphate + ADP + H(+). It participates in amino-sugar metabolism; 1,6-anhydro-N-acetylmuramate degradation. Its pathway is cell wall biogenesis; peptidoglycan recycling. Its function is as follows. Catalyzes the specific phosphorylation of 1,6-anhydro-N-acetylmuramic acid (anhMurNAc) with the simultaneous cleavage of the 1,6-anhydro ring, generating MurNAc-6-P. Is required for the utilization of anhMurNAc either imported from the medium or derived from its own cell wall murein, and thus plays a role in cell wall recycling. The protein is Anhydro-N-acetylmuramic acid kinase of Bacillus cereus (strain AH820).